The following is a 512-amino-acid chain: Anaerobic nitric oxide reductase transcription regulator NorR (512 aa).

Positions 190–419 (MIGESLAMQE…LEHVISRAAV (230 aa)) constitute a Sigma-54 factor interaction domain. ATP-binding positions include 218–225 (GETGVGKE) and 281–290 (ADNGTLFLDE). The segment at residues 487–506 (WAATARALQLDTGNLHRLAK) is a DNA-binding region (H-T-H motif).

Its pathway is nitrogen metabolism; nitric oxide reduction. Its function is as follows. Required for the expression of anaerobic nitric oxide (NO) reductase, acts as a transcriptional activator for at least the norVW operon. Activation also requires sigma-54. The chain is Anaerobic nitric oxide reductase transcription regulator NorR from Aliivibrio fischeri (strain ATCC 700601 / ES114) (Vibrio fischeri).